The chain runs to 618 residues: DNA mismatch repair protein MutL (618 aa).

Residues 367 to 381 (EPTAAREPATPRYSG) are compositionally biased toward low complexity. The disordered stretch occupies residues 367 to 402 (EPTAAREPATPRYSGGASGGNGGRQSAGGWPHAQPG). A compositionally biased stretch (gly residues) spans 382 to 392 (GASGGNGGRQS).

Belongs to the DNA mismatch repair MutL/HexB family.

In terms of biological role, this protein is involved in the repair of mismatches in DNA. It is required for dam-dependent methyl-directed DNA mismatch repair. May act as a 'molecular matchmaker', a protein that promotes the formation of a stable complex between two or more DNA-binding proteins in an ATP-dependent manner without itself being part of a final effector complex. This Salmonella dublin (strain CT_02021853) protein is DNA mismatch repair protein MutL.